The sequence spans 287 residues: uncharacterized protein (287 aa).

The next 10 membrane-spanning stretches (helical) occupy residues 7–28 (LLLT…RAAL), 32–54 (AIDA…AVLL), 67–86 (GWRG…YAYV), 91–113 (GTGA…LLRG), 120–139 (ALLG…LPGA), 144–163 (LGGA…YTLL), 170–192 (PLAV…LLAF), 202–224 (GLAY…WYSA), 231–253 (IQGA…LLLG), and 263–280 (ATLA…PRLG). 2 consecutive EamA domains span residues 15 to 136 (LAFA…FLLL) and 155 to 276 (LAWG…LILA).

It localises to the cell membrane. This is an uncharacterized protein from Pseudomonas aeruginosa (strain ATCC 15692 / DSM 22644 / CIP 104116 / JCM 14847 / LMG 12228 / 1C / PRS 101 / PAO1).